We begin with the raw amino-acid sequence, 423 residues long: D-threonate kinase (423 aa).

Substrate-binding positions include D9, R51, and 81-84 (KIDS). Residues S245, 355 to 358 (GGDI), and G401 contribute to the ATP site.

The protein belongs to the four-carbon acid sugar kinase family.

The catalysed reaction is D-threonate + ATP = 4-O-phospho-D-threonate + ADP + H(+). Its function is as follows. Catalyzes the ATP-dependent phosphorylation of D-threonate to D-threonate 4-phosphate. Can also phosphorylate 4-hydroxy-L-threonine, with lower efficiency. This side reaction may serve to deal with the toxicity of 4-hydroxy-L-threonine by converting it into 4-hydroxy-L-threonine 4-phosphate, a useful product that can be used by PdxA2. This is D-threonate kinase from Salmonella typhimurium (strain LT2 / SGSC1412 / ATCC 700720).